Consider the following 344-residue polypeptide: 4-dimethylallyltryptophan N-methyltransferase easF (344 aa).

The protein belongs to the methyltransferase superfamily. In terms of assembly, homodimer.

It carries out the reaction 4-(3-methylbut-2-enyl)-L-tryptophan + S-adenosyl-L-methionine = 4-(3-methylbut-2-enyl)-L-abrine + S-adenosyl-L-homocysteine + H(+). Its pathway is alkaloid biosynthesis; ergot alkaloid biosynthesis. Its function is as follows. 4-dimethylallyltryptophan N-methyltransferase; part of the gene cluster that mediates the biosynthesis of fungal ergot alkaloid. DmaW catalyzes the first step of ergot alkaloid biosynthesis by condensing dimethylallyl diphosphate (DMAP) and tryptophan to form 4-dimethylallyl-L-tryptophan. The second step is catalyzed by the methyltransferase easF that methylates 4-dimethylallyl-L-tryptophan in the presence of S-adenosyl-L-methionine, resulting in the formation of 4-dimethylallyl-L-abrine. The catalase easC and the FAD-dependent oxidoreductase easE then transform 4-dimethylallyl-L-abrine to chanoclavine-I which is further oxidized by easD in the presence of NAD(+), resulting in the formation of chanoclavine-I aldehyde. Agroclavine dehydrogenase easG then mediates the conversion of chanoclavine-I aldehyde to agroclavine via a non-enzymatic adduct reaction: the substrate is an iminium intermediate that is formed spontaneously from chanoclavine-I aldehyde in the presence of glutathione. The presence of easA is not required to complete this reaction. Further conversion of agroclavine to paspalic acid is a two-step process involving oxidation of agroclavine to elymoclavine and of elymoclavine to paspalic acid, the second step being performed by the elymoclavine oxidase cloA. Paspalic acid is then further converted to D-lysergic acid. Ergopeptines are assembled from D-lysergic acid and three different amino acids by the D-lysergyl-peptide-synthetases composed each of a monomudular and a trimodular nonribosomal peptide synthetase subunit. LpsB and lpsC encode the monomodular subunits responsible for D-lysergic acid activation and incorporation into the ergopeptine backbone. LpsA1 and A2 subunits encode the trimodular nonribosomal peptide synthetase assembling the tripeptide portion of ergopeptines. LpsA1 is responsible for formation of the major ergopeptine, ergotamine, and lpsA2 for alpha-ergocryptine, the minor ergopeptine of the total alkaloid mixture elaborated by C.purpurea. D-lysergyl-tripeptides are assembled by the nonribosomal peptide synthetases and released as N-(D-lysergyl-aminoacyl)-lactams. Cyclolization of the D-lysergyl-tripeptides is performed by the Fe(2+)/2-ketoglutarate-dependent dioxygenase easH which introduces a hydroxyl group into N-(D-lysergyl-aminoacyl)-lactam at alpha-C of the aminoacyl residue followed by spontaneous condensation with the terminal lactam carbonyl group. In Claviceps purpurea (strain 20.1) (Ergot fungus), this protein is 4-dimethylallyltryptophan N-methyltransferase easF.